Consider the following 276-residue polypeptide: NAD kinase (276 aa).

The Proton acceptor role is filled by D61. Residues D61–G62, R66, N135–E136, R146, H163, D165, and A200 each bind NAD(+).

The protein belongs to the NAD kinase family. A divalent metal cation is required as a cofactor.

The protein resides in the cytoplasm. The catalysed reaction is NAD(+) + ATP = ADP + NADP(+) + H(+). Its function is as follows. Involved in the regulation of the intracellular balance of NAD and NADP, and is a key enzyme in the biosynthesis of NADP. Catalyzes specifically the phosphorylation on 2'-hydroxyl of the adenosine moiety of NAD to yield NADP. This chain is NAD kinase, found in Chloroflexus aurantiacus (strain ATCC 29366 / DSM 635 / J-10-fl).